The following is a 122-amino-acid chain: Large ribosomal subunit protein uL14 (122 aa).

The protein belongs to the universal ribosomal protein uL14 family. As to quaternary structure, part of the 50S ribosomal subunit. Forms a cluster with proteins L3 and L19. In the 70S ribosome, L14 and L19 interact and together make contacts with the 16S rRNA in bridges B5 and B8.

Its function is as follows. Binds to 23S rRNA. Forms part of two intersubunit bridges in the 70S ribosome. In Baumannia cicadellinicola subsp. Homalodisca coagulata, this protein is Large ribosomal subunit protein uL14.